The chain runs to 188 residues: Elongation factor P (188 aa).

Belongs to the elongation factor P family.

The protein resides in the cytoplasm. Its pathway is protein biosynthesis; polypeptide chain elongation. Involved in peptide bond synthesis. Stimulates efficient translation and peptide-bond synthesis on native or reconstituted 70S ribosomes in vitro. Probably functions indirectly by altering the affinity of the ribosome for aminoacyl-tRNA, thus increasing their reactivity as acceptors for peptidyl transferase. This chain is Elongation factor P, found in Pseudomonas aeruginosa (strain LESB58).